The following is a 329-amino-acid chain: Myoblast determination protein 1 homolog (329 aa).

A bHLH domain is found at 160–211 (DRRKAATMRERRRLRKVNEAFEVVKQRTCPNPNQRLPKVEILRSAIDYINTL). Positions 256 to 279 (NPDGPNVYDDEDLSDTDEDRDHHH) are disordered. Residues 263 to 273 (YDDEDLSDTDE) show a composition bias toward acidic residues.

In terms of assembly, efficient DNA binding requires dimerization with another bHLH protein. In terms of tissue distribution, body wall muscle cells; in clonal muscle precursors, in a set of early embryonic blastomeres (the ms-granddaughters), and in six glial-like cells called GLRS.

The protein localises to the nucleus. Accumulation defines the body wall muscle cell fate during embryogenesis. The sequence is that of Myoblast determination protein 1 homolog (hlh-1) from Caenorhabditis briggsae.